A 399-amino-acid polypeptide reads, in one-letter code: Galactokinase (399 aa).

42–45 lines the substrate pocket; the sequence is EHTD. ATP is bound by residues Ser-76 and 133-139; that span reads ASGLSSS. Mg(2+) contacts are provided by Ser-139 and Glu-171. Asp-183 acts as the Proton acceptor in catalysis. Tyr-233 serves as a coordination point for substrate.

Belongs to the GHMP kinase family. GalK subfamily.

It localises to the cytoplasm. The catalysed reaction is alpha-D-galactose + ATP = alpha-D-galactose 1-phosphate + ADP + H(+). It functions in the pathway carbohydrate metabolism; galactose metabolism. In terms of biological role, catalyzes the transfer of the gamma-phosphate of ATP to D-galactose to form alpha-D-galactose-1-phosphate (Gal-1-P). The protein is Galactokinase of Lactococcus lactis subsp. cremoris (strain MG1363).